The chain runs to 270 residues: 4-hydroxy-tetrahydrodipicolinate reductase (270 aa).

Residues 11–16 (GAGGRM) and glutamate 37 each bind NAD(+). Arginine 38 is an NADP(+) binding site. NAD(+) is bound by residues 101–103 (GTT) and 125–128 (APNM). Histidine 158 functions as the Proton donor/acceptor in the catalytic mechanism. Histidine 159 contacts (S)-2,3,4,5-tetrahydrodipicolinate. Residue lysine 162 is the Proton donor of the active site. 168–169 (GT) lines the (S)-2,3,4,5-tetrahydrodipicolinate pocket.

The protein belongs to the DapB family.

Its subcellular location is the cytoplasm. The enzyme catalyses (S)-2,3,4,5-tetrahydrodipicolinate + NAD(+) + H2O = (2S,4S)-4-hydroxy-2,3,4,5-tetrahydrodipicolinate + NADH + H(+). The catalysed reaction is (S)-2,3,4,5-tetrahydrodipicolinate + NADP(+) + H2O = (2S,4S)-4-hydroxy-2,3,4,5-tetrahydrodipicolinate + NADPH + H(+). It participates in amino-acid biosynthesis; L-lysine biosynthesis via DAP pathway; (S)-tetrahydrodipicolinate from L-aspartate: step 4/4. In terms of biological role, catalyzes the conversion of 4-hydroxy-tetrahydrodipicolinate (HTPA) to tetrahydrodipicolinate. This chain is 4-hydroxy-tetrahydrodipicolinate reductase, found in Shewanella putrefaciens (strain CN-32 / ATCC BAA-453).